The chain runs to 130 residues: Small ribosomal subunit protein uS9 (130 aa).

Residues 102–130 form a disordered region; it reads GLLTRDSRMKERKKPGLKGARRAPQFSKR. Positions 111–130 are enriched in basic residues; the sequence is KERKKPGLKGARRAPQFSKR.

It belongs to the universal ribosomal protein uS9 family.

The sequence is that of Small ribosomal subunit protein uS9 from Listeria monocytogenes serovar 1/2a (strain ATCC BAA-679 / EGD-e).